The primary structure comprises 168 residues: Endoribonuclease YbeY (168 aa).

Zn(2+) contacts are provided by histidine 126, histidine 130, and histidine 136.

The protein belongs to the endoribonuclease YbeY family. Zn(2+) is required as a cofactor.

Its subcellular location is the cytoplasm. Single strand-specific metallo-endoribonuclease involved in late-stage 70S ribosome quality control and in maturation of the 3' terminus of the 16S rRNA. The polypeptide is Endoribonuclease YbeY (Sinorhizobium medicae (strain WSM419) (Ensifer medicae)).